The chain runs to 926 residues: Up-regulator of cell proliferation (926 aa).

At Ser-3 the chain carries Phosphoserine. The region spanning 689–924 (RSRLVVLSAL…NIQQLIELLR (236 aa)) is the VLIG-type G domain.

It belongs to the TRAFAC class dynamin-like GTPase superfamily. Very large inducible GTPase (VLIG) family.

The protein resides in the cytoplasm. It localises to the nucleus. May be involved in cell cycle progression through the regulation of cyclin D1 expression. The chain is Up-regulator of cell proliferation (Urgcp) from Mus musculus (Mouse).